The sequence spans 254 residues: 3-deoxy-manno-octulosonate cytidylyltransferase (254 aa).

The protein belongs to the KdsB family.

It localises to the cytoplasm. The enzyme catalyses 3-deoxy-alpha-D-manno-oct-2-ulosonate + CTP = CMP-3-deoxy-beta-D-manno-octulosonate + diphosphate. It functions in the pathway nucleotide-sugar biosynthesis; CMP-3-deoxy-D-manno-octulosonate biosynthesis; CMP-3-deoxy-D-manno-octulosonate from 3-deoxy-D-manno-octulosonate and CTP: step 1/1. The protein operates within bacterial outer membrane biogenesis; lipopolysaccharide biosynthesis. In terms of biological role, activates KDO (a required 8-carbon sugar) for incorporation into bacterial lipopolysaccharide in Gram-negative bacteria. In Bordetella pertussis (strain Tohama I / ATCC BAA-589 / NCTC 13251), this protein is 3-deoxy-manno-octulosonate cytidylyltransferase.